The following is a 475-amino-acid chain: MNLETIIGLEVHVELKTNSKIFSASPTEFGAEPNTQTSVIDLGYPGVLPTLNKEAVNFAMKAAMALNCEIATETKFDRKNYFYPDNPKAYQISQFDKPIGENGWIEIEVDGKKKRIGITRLHLEEDAGKSTHTADGSLVDYNRQGMPLIEIVSEPDMRTPEEAYAYLEKLKSIIQYTGVSDCKMEEGSLRCDANISLRPVGQEKFGTKAELKNLNSFTYVQKGLEHEQVRQEKELLSGGIIQQETRRYDEATKKTILMRVKEGSDDYRYFPEPDLVELYIDDAWKEEVRASIPELPDARKARYVAEIGLPAYDAHVLTLTKEMSDFFEAAIADGADAKLTSNWLMGEVLAYLNKQQKELKDVALTPAGLSKMVQLIEKGTISSKIAKKVFNELIEKGGDPEEIVKAKGLVQISDEGTLRKVVTEILDNNEQSIEDFKNGKDRAIGFLVGQIMKATKGQANPPLVNKILLEEINKR.

It belongs to the GatB/GatE family. GatB subfamily. Heterotrimer of A, B and C subunits.

The enzyme catalyses L-glutamyl-tRNA(Gln) + L-glutamine + ATP + H2O = L-glutaminyl-tRNA(Gln) + L-glutamate + ADP + phosphate + H(+). It carries out the reaction L-aspartyl-tRNA(Asn) + L-glutamine + ATP + H2O = L-asparaginyl-tRNA(Asn) + L-glutamate + ADP + phosphate + 2 H(+). Its function is as follows. Allows the formation of correctly charged Asn-tRNA(Asn) or Gln-tRNA(Gln) through the transamidation of misacylated Asp-tRNA(Asn) or Glu-tRNA(Gln) in organisms which lack either or both of asparaginyl-tRNA or glutaminyl-tRNA synthetases. The reaction takes place in the presence of glutamine and ATP through an activated phospho-Asp-tRNA(Asn) or phospho-Glu-tRNA(Gln). The chain is Aspartyl/glutamyl-tRNA(Asn/Gln) amidotransferase subunit B from Bacillus anthracis (strain A0248).